A 360-amino-acid polypeptide reads, in one-letter code: Phospho-N-acetylmuramoyl-pentapeptide-transferase (360 aa).

Transmembrane regions (helical) follow at residues 26-46, 74-94, 97-117, 132-152, 168-188, 199-219, 236-256, 263-283, 288-308, and 338-358; these read AILG…KLIE, MGGL…GDLG, YVWV…IDDY, WKYI…YTTA, VMPQ…VGSS, GLAI…AYLS, SGEL…FLWF, VFMG…IAVL, ILLV…ILQV, and VIVR…ATLK.

This sequence belongs to the glycosyltransferase 4 family. MraY subfamily. It depends on Mg(2+) as a cofactor.

The protein localises to the cell inner membrane. The catalysed reaction is UDP-N-acetyl-alpha-D-muramoyl-L-alanyl-gamma-D-glutamyl-meso-2,6-diaminopimeloyl-D-alanyl-D-alanine + di-trans,octa-cis-undecaprenyl phosphate = di-trans,octa-cis-undecaprenyl diphospho-N-acetyl-alpha-D-muramoyl-L-alanyl-D-glutamyl-meso-2,6-diaminopimeloyl-D-alanyl-D-alanine + UMP. The protein operates within cell wall biogenesis; peptidoglycan biosynthesis. Its function is as follows. Catalyzes the initial step of the lipid cycle reactions in the biosynthesis of the cell wall peptidoglycan: transfers peptidoglycan precursor phospho-MurNAc-pentapeptide from UDP-MurNAc-pentapeptide onto the lipid carrier undecaprenyl phosphate, yielding undecaprenyl-pyrophosphoryl-MurNAc-pentapeptide, known as lipid I. The sequence is that of Phospho-N-acetylmuramoyl-pentapeptide-transferase from Shewanella sp. (strain ANA-3).